Here is a 137-residue protein sequence, read N- to C-terminus: NADH-quinone oxidoreductase subunit A (137 aa).

3 helical membrane-spanning segments follow: residues 12-32, 68-88, and 94-114; these read WAFA…LGVS, LVAM…AWAV, and GWVG…GLVY.

Belongs to the complex I subunit 3 family. In terms of assembly, NDH-1 is composed of 13 different subunits. Subunits NuoA, H, J, K, L, M, N constitute the membrane sector of the complex.

The protein localises to the cell inner membrane. It carries out the reaction a quinone + NADH + 5 H(+)(in) = a quinol + NAD(+) + 4 H(+)(out). Functionally, NDH-1 shuttles electrons from NADH, via FMN and iron-sulfur (Fe-S) centers, to quinones in the respiratory chain. The immediate electron acceptor for the enzyme in this species is believed to be ubiquinone. Couples the redox reaction to proton translocation (for every two electrons transferred, four hydrogen ions are translocated across the cytoplasmic membrane), and thus conserves the redox energy in a proton gradient. In Ectopseudomonas mendocina (strain ymp) (Pseudomonas mendocina), this protein is NADH-quinone oxidoreductase subunit A.